Reading from the N-terminus, the 96-residue chain is uncharacterized protein (96 aa).

This is an uncharacterized protein from Bacillus subtilis (strain 168).